The sequence spans 121 residues: Small ribosomal subunit protein uS13 (121 aa).

The disordered stretch occupies residues 97–121 (VRGQRTRTNARTRRGARKTVAGKKK). Positions 100-121 (QRTRTNARTRRGARKTVAGKKK) are enriched in basic residues.

Belongs to the universal ribosomal protein uS13 family. As to quaternary structure, part of the 30S ribosomal subunit. Forms a loose heterodimer with protein S19. Forms two bridges to the 50S subunit in the 70S ribosome.

In terms of biological role, located at the top of the head of the 30S subunit, it contacts several helices of the 16S rRNA. In the 70S ribosome it contacts the 23S rRNA (bridge B1a) and protein L5 of the 50S subunit (bridge B1b), connecting the 2 subunits; these bridges are implicated in subunit movement. Contacts the tRNAs in the A and P-sites. The polypeptide is Small ribosomal subunit protein uS13 (Synechococcus sp. (strain CC9311)).